Here is a 363-residue protein sequence, read N- to C-terminus: Phosphoserine aminotransferase (363 aa).

Arg42 provides a ligand contact to L-glutamate. Pyridoxal 5'-phosphate-binding positions include 76–77, Trp102, Thr156, Asp175, and Gln198; that span reads GR. Lys199 is subject to N6-(pyridoxal phosphate)lysine. 240-241 contacts pyridoxal 5'-phosphate; it reads NT.

This sequence belongs to the class-V pyridoxal-phosphate-dependent aminotransferase family. SerC subfamily. As to quaternary structure, homodimer. The cofactor is pyridoxal 5'-phosphate.

The protein resides in the cytoplasm. The enzyme catalyses O-phospho-L-serine + 2-oxoglutarate = 3-phosphooxypyruvate + L-glutamate. It carries out the reaction 4-(phosphooxy)-L-threonine + 2-oxoglutarate = (R)-3-hydroxy-2-oxo-4-phosphooxybutanoate + L-glutamate. It participates in amino-acid biosynthesis; L-serine biosynthesis; L-serine from 3-phospho-D-glycerate: step 2/3. The protein operates within cofactor biosynthesis; pyridoxine 5'-phosphate biosynthesis; pyridoxine 5'-phosphate from D-erythrose 4-phosphate: step 3/5. Functionally, catalyzes the reversible conversion of 3-phosphohydroxypyruvate to phosphoserine and of 3-hydroxy-2-oxo-4-phosphonooxybutanoate to phosphohydroxythreonine. The sequence is that of Phosphoserine aminotransferase from Shewanella sp. (strain MR-4).